Reading from the N-terminus, the 436-residue chain is G2/mitotic-specific cyclin-B (436 aa).

Residues 1–17 (MSTINNPLNIKTRSHSS) show a composition bias toward polar residues. The interval 1-33 (MSTINNPLNIKTRSHSSMGGGMIMDENKVPKSS) is disordered.

Belongs to the cyclin family. Cyclin AB subfamily. In terms of assembly, interacts with the cdk1 protein kinase to form a serine/threonine kinase holoenzyme complex also known as maturation promoting factor (MPF). The cyclin subunit imparts substrate specificity to the complex.

Essential for the control of the cell cycle at the G2/M (mitosis) transition. The sequence is that of G2/mitotic-specific cyclin-B (cycB) from Dictyostelium discoideum (Social amoeba).